Consider the following 581-residue polypeptide: Rhodanese-like domain-containing protein 6 (581 aa).

A Rhodanese domain is found at 158–258 (ENKELVLLDA…YLEQFPSGGF (101 aa)). The Cysteine persulfide intermediate role is filled by C216.

The polypeptide is Rhodanese-like domain-containing protein 6 (STR6) (Arabidopsis thaliana (Mouse-ear cress)).